A 264-amino-acid polypeptide reads, in one-letter code: Thiazole synthase (264 aa).

Catalysis depends on lysine 98, which acts as the Schiff-base intermediate with DXP. 1-deoxy-D-xylulose 5-phosphate contacts are provided by residues glycine 159, alanine 185–glycine 186, and alanine 207–threonine 208.

Belongs to the ThiG family. As to quaternary structure, homotetramer. Forms heterodimers with either ThiH or ThiS.

It localises to the cytoplasm. The catalysed reaction is [ThiS sulfur-carrier protein]-C-terminal-Gly-aminoethanethioate + 2-iminoacetate + 1-deoxy-D-xylulose 5-phosphate = [ThiS sulfur-carrier protein]-C-terminal Gly-Gly + 2-[(2R,5Z)-2-carboxy-4-methylthiazol-5(2H)-ylidene]ethyl phosphate + 2 H2O + H(+). It participates in cofactor biosynthesis; thiamine diphosphate biosynthesis. Its function is as follows. Catalyzes the rearrangement of 1-deoxy-D-xylulose 5-phosphate (DXP) to produce the thiazole phosphate moiety of thiamine. Sulfur is provided by the thiocarboxylate moiety of the carrier protein ThiS. In vitro, sulfur can be provided by H(2)S. This chain is Thiazole synthase, found in Mycobacterium marinum (strain ATCC BAA-535 / M).